Consider the following 284-residue polypeptide: Acetylglutamate kinase (284 aa).

Substrate-binding positions include 64-65 (GG), R86, and N181.

It belongs to the acetylglutamate kinase family. ArgB subfamily.

It localises to the cytoplasm. It carries out the reaction N-acetyl-L-glutamate + ATP = N-acetyl-L-glutamyl 5-phosphate + ADP. The protein operates within amino-acid biosynthesis; L-arginine biosynthesis; N(2)-acetyl-L-ornithine from L-glutamate: step 2/4. Catalyzes the ATP-dependent phosphorylation of N-acetyl-L-glutamate. This Wolinella succinogenes (strain ATCC 29543 / DSM 1740 / CCUG 13145 / JCM 31913 / LMG 7466 / NCTC 11488 / FDC 602W) (Vibrio succinogenes) protein is Acetylglutamate kinase.